Reading from the N-terminus, the 211-residue chain is MNSLSTSTFSPVAFSLGLLLVMATAFPTPVPLGEDFKDGTTSKRPFTSPDKTEELIKYILGRISAMRKEMCEKYDKCENSKEALSENNLNLPKMTEKDGCFQSGFNQETCLMRITIGLLEFQIYLDYLQNYYEGDKGNTEAVQISTKALIQLLRQKVKQPEEVSTPNPITGSSLLNKLQTENQWMKNTKMILILRSLEDFLQFSLRAVRIM.

The N-terminal stretch at 1–25 (MNSLSTSTFSPVAFSLGLLLVMATA) is a signal peptide. Residues cysteine 71 and cysteine 77 are joined by a disulfide bond. Serine 80 carries the post-translational modification Phosphoserine. A disulfide bridge links cysteine 100 with cysteine 110.

It belongs to the IL-6 superfamily. In terms of assembly, component of a hexamer of two molecules each of IL6, IL6R and IL6ST; first binds to IL6R to associate with the signaling subunit IL6ST. Interacts with IL6R (via the N-terminal ectodomain); this interaction may be affected by IL6R-binding with SORL1, hence decreasing IL6 cis signaling. Interacts with SORL1 (via the N-terminal ectodomain); this interaction leads to IL6 internalization and lysosomal degradation. May form a trimeric complex with the soluble SORL1 ectodomain and soluble IL6R receptor; this interaction might stabilize circulating IL6, hence promoting IL6 trans signaling.

The protein localises to the secreted. Cytokine with a wide variety of biological functions in immunity, tissue regeneration, and metabolism. Binds to IL6R, then the complex associates to the signaling subunit IL6ST/gp130 to trigger the intracellular IL6-signaling pathway. The interaction with the membrane-bound IL6R and IL6ST stimulates 'classic signaling', whereas the binding of IL6 and soluble IL6R to IL6ST stimulates 'trans-signaling'. Alternatively, 'cluster signaling' occurs when membrane-bound IL6:IL6R complexes on transmitter cells activate IL6ST receptors on neighboring receiver cells. In terms of biological role, IL6 is a potent inducer of the acute phase response. Rapid production of IL6 contributes to host defense during infection and tissue injury, but excessive IL6 synthesis is involved in disease pathology. In the innate immune response, is synthesized by myeloid cells, such as macrophages and dendritic cells, upon recognition of pathogens through toll-like receptors (TLRs) at the site of infection or tissue injury. In the adaptive immune response, is required for the differentiation of B cells into immunoglobulin-secreting cells. Plays a major role in the differentiation of CD4(+) T cell subsets. Essential factor for the development of T follicular helper (Tfh) cells that are required for the induction of germinal-center formation. Required to drive naive CD4(+) T cells to the Th17 lineage. Also required for proliferation of myeloma cells and the survival of plasmablast cells. Its function is as follows. Acts as an essential factor in bone homeostasis and on vessels directly or indirectly by induction of VEGF, resulting in increased angiogenesis activity and vascular permeability. Induces, through 'trans-signaling' and synergistically with IL1B and TNF, the production of VEGF. Involved in metabolic controls, is discharged into the bloodstream after muscle contraction increasing lipolysis and improving insulin resistance. 'Trans-signaling' in central nervous system also regulates energy and glucose homeostasis. Mediates, through GLP-1, crosstalk between insulin-sensitive tissues, intestinal L cells and pancreatic islets to adapt to changes in insulin demand. Also acts as a myokine. Plays a protective role during liver injury, being required for maintenance of tissue regeneration. Also has a pivotal role in iron metabolism by regulating HAMP/hepcidin expression upon inflammation or bacterial infection. Through activation of IL6ST-YAP-NOTCH pathway, induces inflammation-induced epithelial regeneration. This Lama glama (Llama) protein is Interleukin-6 (IL6).